The sequence spans 567 residues: Methionine--tRNA ligase (567 aa).

The 'HIGH' region signature appears at 11–21 (PYVQTVPHLGN). The Zn(2+) site is built by cysteine 143, cysteine 146, cysteine 156, and cysteine 159. The 'KMSKS' region motif lies at 331 to 335 (KFSKS). Lysine 334 provides a ligand contact to ATP.

Belongs to the class-I aminoacyl-tRNA synthetase family. MetG type 1 subfamily. Requires Zn(2+) as cofactor.

It is found in the cytoplasm. The enzyme catalyses tRNA(Met) + L-methionine + ATP = L-methionyl-tRNA(Met) + AMP + diphosphate. Functionally, is required not only for elongation of protein synthesis but also for the initiation of all mRNA translation through initiator tRNA(fMet) aminoacylation. The protein is Methionine--tRNA ligase of Pyrobaculum islandicum (strain DSM 4184 / JCM 9189 / GEO3).